The following is a 253-amino-acid chain: Ribosome maturation protein SBDS (253 aa).

Belongs to the SDO1/SBDS family. As to quaternary structure, associates with the 60S ribosomal subunit.

It is found in the cytoplasm. The protein localises to the nucleus. Its subcellular location is the nucleolus. It localises to the nucleoplasm. The protein resides in the cytoskeleton. It is found in the spindle. Required for the assembly of mature ribosomes and ribosome biogenesis. Together with K10C3.5b/EFL1, triggers the GTP-dependent release of ribosome maturation factors from 60S pre-ribosomes in the cytoplasm, thereby activating ribosomes for translation competence by allowing 80S ribosome assembly. Required for normal levels of protein synthesis. May play a role in cellular stress resistance. May play a role in cellular response to DNA damage. May play a role in cell proliferation. This is Ribosome maturation protein SBDS (sbds-1) from Caenorhabditis elegans.